The primary structure comprises 332 residues: Fructose-1,6-bisphosphatase class 1 (332 aa).

Positions 89, 110, 112, and 113 each coordinate Mg(2+). Substrate is bound by residues D113–S116, N206, Y239, Y257–Y259, and K269. Residue E275 participates in Mg(2+) binding.

Belongs to the FBPase class 1 family. Homotetramer. Mg(2+) serves as cofactor.

It localises to the cytoplasm. The enzyme catalyses beta-D-fructose 1,6-bisphosphate + H2O = beta-D-fructose 6-phosphate + phosphate. It participates in carbohydrate biosynthesis; gluconeogenesis. The sequence is that of Fructose-1,6-bisphosphatase class 1 from Klebsiella pneumoniae (strain 342).